A 320-amino-acid polypeptide reads, in one-letter code: 4-hydroxy-3-methylbut-2-enyl diphosphate reductase (320 aa).

Cys-13 contacts [4Fe-4S] cluster. (2E)-4-hydroxy-3-methylbut-2-enyl diphosphate is bound by residues His-41 and His-75. Positions 41 and 75 each coordinate dimethylallyl diphosphate. Isopentenyl diphosphate is bound by residues His-41 and His-75. Cys-97 contacts [4Fe-4S] cluster. Residue His-125 coordinates (2E)-4-hydroxy-3-methylbut-2-enyl diphosphate. Residue His-125 coordinates dimethylallyl diphosphate. Isopentenyl diphosphate is bound at residue His-125. The active-site Proton donor is the Glu-127. Residue Thr-168 participates in (2E)-4-hydroxy-3-methylbut-2-enyl diphosphate binding. [4Fe-4S] cluster is bound at residue Cys-225. 4 residues coordinate (2E)-4-hydroxy-3-methylbut-2-enyl diphosphate: Ser-253, Ser-254, Asn-255, and Ser-302. Residues Ser-253, Ser-254, Asn-255, and Ser-302 each coordinate dimethylallyl diphosphate. Isopentenyl diphosphate is bound by residues Ser-253, Ser-254, Asn-255, and Ser-302.

The protein belongs to the IspH family. The cofactor is [4Fe-4S] cluster.

The enzyme catalyses isopentenyl diphosphate + 2 oxidized [2Fe-2S]-[ferredoxin] + H2O = (2E)-4-hydroxy-3-methylbut-2-enyl diphosphate + 2 reduced [2Fe-2S]-[ferredoxin] + 2 H(+). It carries out the reaction dimethylallyl diphosphate + 2 oxidized [2Fe-2S]-[ferredoxin] + H2O = (2E)-4-hydroxy-3-methylbut-2-enyl diphosphate + 2 reduced [2Fe-2S]-[ferredoxin] + 2 H(+). Its pathway is isoprenoid biosynthesis; dimethylallyl diphosphate biosynthesis; dimethylallyl diphosphate from (2E)-4-hydroxy-3-methylbutenyl diphosphate: step 1/1. It functions in the pathway isoprenoid biosynthesis; isopentenyl diphosphate biosynthesis via DXP pathway; isopentenyl diphosphate from 1-deoxy-D-xylulose 5-phosphate: step 6/6. Its function is as follows. Catalyzes the conversion of 1-hydroxy-2-methyl-2-(E)-butenyl 4-diphosphate (HMBPP) into a mixture of isopentenyl diphosphate (IPP) and dimethylallyl diphosphate (DMAPP). Acts in the terminal step of the DOXP/MEP pathway for isoprenoid precursor biosynthesis. This is 4-hydroxy-3-methylbut-2-enyl diphosphate reductase from Chlorobium luteolum (strain DSM 273 / BCRC 81028 / 2530) (Pelodictyon luteolum).